We begin with the raw amino-acid sequence, 253 residues long: uncharacterized protein (253 aa).

This sequence belongs to the DcsA family.

This is an uncharacterized protein from Bacillus subtilis (strain 168).